The following is a 149-amino-acid chain: Large ribosomal subunit protein bL9 (149 aa).

This sequence belongs to the bacterial ribosomal protein bL9 family.

Binds to the 23S rRNA. The protein is Large ribosomal subunit protein bL9 of Xanthomonas axonopodis pv. citri (strain 306).